The chain runs to 230 residues: Cytidylate kinase (230 aa).

Residue 12 to 20 (GPSGAGKGT) coordinates ATP.

This sequence belongs to the cytidylate kinase family. Type 1 subfamily.

It localises to the cytoplasm. It catalyses the reaction CMP + ATP = CDP + ADP. The enzyme catalyses dCMP + ATP = dCDP + ADP. The chain is Cytidylate kinase from Shewanella sediminis (strain HAW-EB3).